A 220-amino-acid chain; its full sequence is Protein-L-isoaspartate O-methyltransferase (220 aa).

Serine 64 is an active-site residue.

Belongs to the methyltransferase superfamily. L-isoaspartyl/D-aspartyl protein methyltransferase family.

Its subcellular location is the cytoplasm. It catalyses the reaction [protein]-L-isoaspartate + S-adenosyl-L-methionine = [protein]-L-isoaspartate alpha-methyl ester + S-adenosyl-L-homocysteine. Its function is as follows. Catalyzes the methyl esterification of L-isoaspartyl residues in peptides and proteins that result from spontaneous decomposition of normal L-aspartyl and L-asparaginyl residues. It plays a role in the repair and/or degradation of damaged proteins. The chain is Protein-L-isoaspartate O-methyltransferase from Methanoculleus marisnigri (strain ATCC 35101 / DSM 1498 / JR1).